Consider the following 524-residue polypeptide: Cytokinin dehydrogenase 4 (524 aa).

The first 26 residues, 1–26, serve as a signal peptide directing secretion; sequence MTNTLCLSLITLITLFISLTPTLIKS. N-linked (GlcNAc...) asparagine glycans are attached at residues N39 and N58. The FAD-binding PCMH-type domain maps to 60 to 249; the sequence is TDENPGAVLC…TRARIALDHA (190 aa). Residues A104, G106, and G108 each coordinate FAD. H109 carries the post-translational modification Pros-8alpha-FAD histidine. The FAD site is built by S110 and Q114. N-linked (GlcNAc...) asparagine glycosylation is present at N124. The FAD site is built by D173, S178, S184, I188, and I239. The N-linked (GlcNAc...) asparagine glycan is linked to N411. 3 residues coordinate FAD: Y482, S517, and Q520.

This sequence belongs to the oxygen-dependent FAD-linked oxidoreductase family. It depends on FAD as a cofactor. As to expression, expressed in trichomes and in developing stomata of young growing leaves. Strong expression in stipules and in the root cap, but not detected in the root meristem.

The protein localises to the secreted. Its subcellular location is the extracellular space. The catalysed reaction is N(6)-dimethylallyladenine + A + H2O = 3-methyl-2-butenal + adenine + AH2. Functionally, catalyzes the oxidation of cytokinins, a family of N(6)-substituted adenine derivatives that are plant hormones, where the substituent is an isopentenyl group. The chain is Cytokinin dehydrogenase 4 (CKX4) from Arabidopsis thaliana (Mouse-ear cress).